We begin with the raw amino-acid sequence, 139 residues long: uncharacterized protein (139 aa).

This is an uncharacterized protein from Galliformes (FAdV-1).